Reading from the N-terminus, the 200-residue chain is Arylesterase (200 aa).

The signal sequence occupies residues 1–19 (MIRLLSLVLFFCLSAASQA). Ser29 (nucleophile) is an active-site residue. Residues Asp176 and His179 contribute to the active site.

Belongs to the 'GDSL' lipolytic enzyme family. Homodimer.

It catalyses the reaction a phenyl acetate + H2O = a phenol + acetate + H(+). In terms of biological role, favors the hydrolysis of several arylesters. The sequence is that of Arylesterase from Vibrio mimicus.